We begin with the raw amino-acid sequence, 623 residues long: Chaperone protein DnaK (623 aa).

At threonine 175 the chain carries Phosphothreonine; by autocatalysis. The interval alanine 578 to lysine 623 is disordered. The span at asparagine 591–glycine 604 shows a compositional bias: low complexity. Basic and acidic residues predominate over residues asparagine 605–lysine 623.

Belongs to the heat shock protein 70 family.

In terms of biological role, acts as a chaperone. The chain is Chaperone protein DnaK from Clostridium botulinum (strain 657 / Type Ba4).